Reading from the N-terminus, the 276-residue chain is NAD-capped RNA hydrolase NudC (276 aa).

Substrate is bound at residue arginine 82. Residues cysteine 112 and cysteine 115 each contribute to the Zn(2+) site. A substrate-binding site is contributed by glutamate 125. Residues cysteine 130 and cysteine 133 each contribute to the Zn(2+) site. Tyrosine 138 is a substrate binding site. The region spanning 139-262 (PRISPSMIVL…SIARYLIDLY (124 aa)) is the Nudix hydrolase domain. The a divalent metal cation site is built by alanine 172, glutamate 188, and glutamate 192. The Nudix box signature appears at 173–194 (GFAEPGESAEDCLVREVREEVA). 206 to 213 (QCWPFPHS) contacts substrate. Glutamate 233 provides a ligand contact to a divalent metal cation. Alanine 255 is a substrate binding site.

Belongs to the Nudix hydrolase family. NudC subfamily. In terms of assembly, homodimer. Requires Mg(2+) as cofactor. Mn(2+) is required as a cofactor. Zn(2+) serves as cofactor.

The catalysed reaction is a 5'-end NAD(+)-phospho-ribonucleoside in mRNA + H2O = a 5'-end phospho-adenosine-phospho-ribonucleoside in mRNA + beta-nicotinamide D-ribonucleotide + 2 H(+). It carries out the reaction NAD(+) + H2O = beta-nicotinamide D-ribonucleotide + AMP + 2 H(+). The enzyme catalyses NADH + H2O = reduced beta-nicotinamide D-ribonucleotide + AMP + 2 H(+). Functionally, mRNA decapping enzyme that specifically removes the nicotinamide adenine dinucleotide (NAD) cap from a subset of mRNAs by hydrolyzing the diphosphate linkage to produce nicotinamide mononucleotide (NMN) and 5' monophosphate mRNA. The NAD-cap is present at the 5'-end of some mRNAs and stabilizes RNA against 5'-processing. Has preference for mRNAs with a 5'-end purine. Catalyzes the hydrolysis of a broad range of dinucleotide pyrophosphates. This Pseudomonas putida (strain GB-1) protein is NAD-capped RNA hydrolase NudC.